A 1740-amino-acid chain; its full sequence is DNA polymerase (1740 aa).

The disordered stretch occupies residues 472 to 491; it reads IEMPHNQEDSDSEKEDEDTD. Residues 480–491 are compositionally biased toward acidic residues; that stretch reads DSDSEKEDEDTD. Residues 1189 to 1334 form the DOD-type homing endonuclease domain; sequence VWGFFMGDGS…LFYLLKSLGY (146 aa). Residues 1673–1701 form a disordered region; it reads PKESGSKTAKKPYQSQKLQKTKSSNKSQI. Over residues 1685–1700 the composition is skewed to polar residues; that stretch reads YQSQKLQKTKSSNKSQ.

It belongs to the DNA polymerase type-B family. In terms of processing, this protein undergoes a protein self splicing that involves a post-translational excision of the intervening region (intein) followed by peptide ligation.

The catalysed reaction is DNA(n) + a 2'-deoxyribonucleoside 5'-triphosphate = DNA(n+1) + diphosphate. The polypeptide is DNA polymerase (POLB) (Acanthamoeba polyphaga (Amoeba)).